Here is a 119-residue protein sequence, read N- to C-terminus: Small ribosomal subunit protein uS17 (119 aa).

Over residues 1–21 the composition is skewed to low complexity; that stretch reads MAEAKTGAKATKSAAAGAADG. The interval 1–44 is disordered; the sequence is MAEAKTGAKATKSAAAGAADGASKEKGPKHTPSTPKPRGRRKTR.

It belongs to the universal ribosomal protein uS17 family. In terms of assembly, part of the 30S ribosomal subunit.

In terms of biological role, one of the primary rRNA binding proteins, it binds specifically to the 5'-end of 16S ribosomal RNA. This Mycobacterium marinum (strain ATCC BAA-535 / M) protein is Small ribosomal subunit protein uS17.